Reading from the N-terminus, the 260-residue chain is UPF0294 protein plu0699 (260 aa).

This sequence belongs to the UPF0294 family.

The protein localises to the cytoplasm. In Photorhabdus laumondii subsp. laumondii (strain DSM 15139 / CIP 105565 / TT01) (Photorhabdus luminescens subsp. laumondii), this protein is UPF0294 protein plu0699.